Consider the following 895-residue polypeptide: Probable aminodeoxychorismate synthase, chloroplastic (895 aa).

Residues 1-45 form a disordered region; sequence MAALRLPTPPPPRAPAPWLHSSHRRRVAAPRGAGGGGGGGGAVPP. Residues 1-48 constitute a chloroplast transit peptide; the sequence is MAALRLPTPPPPRAPAPWLHSSHRRRVAAPRGAGGGGGGGGAVPPPPV. A compositionally biased stretch (gly residues) spans 32 to 42; it reads GAGGGGGGGGA. Residues 49 to 307 form the Glutamine amidotransferase type-1 domain; sequence RTLLIDNYDS…KKITTDFGLQ (259 aa). C135 serves as the catalytic Nucleophile. Active-site residues include H281 and E283. Positions 387–875 are PABB component; the sequence is IFSVLFGHHS…KAKAPTKVVE (489 aa).

In the C-terminal section; belongs to the anthranilate synthase component I family.

It is found in the plastid. The protein resides in the chloroplast. The catalysed reaction is chorismate + L-glutamine = 4-amino-4-deoxychorismate + L-glutamate. Its pathway is cofactor biosynthesis; tetrahydrofolate biosynthesis; 4-aminobenzoate from chorismate: step 1/2. It functions in the pathway antibiotic biosynthesis; candicidin biosynthesis. Its function is as follows. Bifunctional enzyme that catalyzes the biosynthesis of 4-amino-4-deoxychorismate (ADC) from chorismate and glutamine. In the first step, a glutamine amidotransferase generates ammonia that is channelled between the binding sites of glutamine and chorismate and used along with chorismate in the second step, catalyzed by aminodeoxychorismate synthase, to produce ADC. Required for the synthesis of 4-aminobenzoate (PABA), an important component in tetrahydrofolate biosynthesis. Does not possess ADC lyase activity. This chain is Probable aminodeoxychorismate synthase, chloroplastic (ADCS), found in Oryza sativa subsp. japonica (Rice).